Consider the following 95-residue polypeptide: Protein TusB (95 aa).

It belongs to the DsrH/TusB family. In terms of assembly, heterohexamer, formed by a dimer of trimers. The hexameric TusBCD complex contains 2 copies each of TusB, TusC and TusD. The TusBCD complex interacts with TusE.

The protein resides in the cytoplasm. Its function is as follows. Part of a sulfur-relay system required for 2-thiolation of 5-methylaminomethyl-2-thiouridine (mnm(5)s(2)U) at tRNA wobble positions. This chain is Protein TusB, found in Salmonella arizonae (strain ATCC BAA-731 / CDC346-86 / RSK2980).